The following is a 209-amino-acid chain: Uridine kinase (209 aa).

12-19 (GGSASGKT) is an ATP binding site.

This sequence belongs to the uridine kinase family.

The protein resides in the cytoplasm. The enzyme catalyses uridine + ATP = UMP + ADP + H(+). It catalyses the reaction cytidine + ATP = CMP + ADP + H(+). The protein operates within pyrimidine metabolism; CTP biosynthesis via salvage pathway; CTP from cytidine: step 1/3. It functions in the pathway pyrimidine metabolism; UMP biosynthesis via salvage pathway; UMP from uridine: step 1/1. In Chloroflexus aurantiacus (strain ATCC 29366 / DSM 635 / J-10-fl), this protein is Uridine kinase.